The primary structure comprises 621 residues: Glutathione-regulated potassium-efflux system protein KefC (621 aa).

A run of 12 helical transmembrane segments spans residues 4 to 24, 26 to 46, 54 to 74, 90 to 110, 114 to 134, 149 to 169, 178 to 198, 218 to 238, 270 to 290, 294 to 314, 326 to 346, and 359 to 379; these read HTLI…PIAV, LGLG…PWGL, AILH…GLEL, GALQ…LLGL, VAEL…MQAM, FAVL…IPLL, LVAF…VVAL, VFSA…EEVG, GLLL…GTLV, LRIV…LWLI, RWFA…FGAA, and ALTL…VLLT. An RCK N-terminal domain is found at 399 to 518; it reads QPRVIVAGFG…AGVEAPERET (120 aa). The interval 598-621 is disordered; sequence GWQGTEEGRHTGDIADEPENKPSA.

This sequence belongs to the monovalent cation:proton antiporter 2 (CPA2) transporter (TC 2.A.37) family. KefC subfamily. As to quaternary structure, homodimer. Interacts with the regulatory subunit KefF.

The protein localises to the cell inner membrane. Its function is as follows. Pore-forming subunit of a potassium efflux system that confers protection against electrophiles. Catalyzes K(+)/H(+) antiport. The protein is Glutathione-regulated potassium-efflux system protein KefC of Klebsiella pneumoniae (strain 342).